A 138-amino-acid polypeptide reads, in one-letter code: uncharacterized protein (138 aa).

The interval 84-104 is disordered; sequence PPKKTSPATSSSLKPRPGPRG. Low complexity predominate over residues 85–98; that stretch reads PKKTSPATSSSLKP.

To M.pneumoniae MPN_413 and MPN_463.

This is an uncharacterized protein from Mycoplasma pneumoniae (strain ATCC 29342 / M129 / Subtype 1) (Mycoplasmoides pneumoniae).